The following is a 415-amino-acid chain: Corticotropin-releasing factor receptor 1 (415 aa).

A signal peptide spans 1-23 (MARHPQLRLVKALLLLGLNPVSA). Over 24-111 (SLQDQHCESL…CQEILNEEKK (88 aa)) the chain is Extracellular. Disulfide bonds link Cys-30–Cys-54, Cys-44–Cys-87, and Cys-68–Cys-102. Asn-38, Asn-78, and Asn-98 each carry an N-linked (GlcNAc...) asparagine glycan. The segment at 99-108 (YSECQEILNE) is important for peptide agonist binding. A helical transmembrane segment spans residues 112–142 (SKVHYHVAVIINYLGHCISLVALLVAFVLFL). The Cytoplasmic segment spans residues 143–149 (RLRSIRC). Residues 150 to 174 (LRNIIHWNLISAFILRNATWFVVQL) traverse the membrane as a helical segment. Residues 175 to 189 (TMSPEVHQSNVGWCR) are Extracellular-facing. An intrachain disulfide couples Cys-188 to Cys-258. The helical transmembrane segment at 190–218 (LVTAAYNYFHVTNFFWMFGEGCYLHTAIV) threads the bilayer. Over 219–225 (LTYSTDR) the chain is Cytoplasmic. A helical transmembrane segment spans residues 226-253 (LRKWMFICIGWGVPFPIIVAWAIGKLYY). The Extracellular segment spans residues 254–269 (DNEKCWFGKRPGVYTD). A helical transmembrane segment spans residues 270-295 (YIYQGPMILVLLINFIFLFNIVRILM). The tract at residues 280–290 (LLINFIFLFNI) is important for antagonist binding. The Cytoplasmic portion of the chain corresponds to 296 to 306 (TKLRASTTSET). Ser-301 is subject to Phosphoserine; by PKA. Residues 307–331 (IQYRKAVKATLVLLPLLGITYMLFF) form a helical membrane-spanning segment. The Extracellular segment spans residues 332–338 (VNPGEDE). The helical transmembrane segment at 339–368 (VSRVVFIYFNSFLESFQGFFVSVFYCFLNS) threads the bilayer. Topologically, residues 369 to 415 (EVRSAIRKRWHRWQDKHSIRARVARAMSIPTSPTRVSFHSIKQSTAV) are cytoplasmic.

It belongs to the G-protein coupled receptor 2 family. In terms of assembly, heterodimer; heterodimerizes with GPER1. Interacts (via N-terminal extracellular domain) with CRH and UCN. Interacts with DLG1; this inhibits endocytosis of CRHR1 after agonist binding. Post-translationally, C-terminal Ser or Thr residues may be phosphorylated. Phosphorylation at Ser-301 by PKA prevents maximal coupling to Gq-protein, and thereby negatively regulates downstream signaling. Expressed abundantly in the pituitary, cerebral cortex, hippocampus, amygdala and cerebellum.

It is found in the cell membrane. It localises to the endosome. Its function is as follows. G-protein coupled receptor for CRH (corticotropin-releasing factor) and UCN (urocortin). Has high affinity for CRH and UCN. Ligand binding causes a conformation change that triggers signaling via guanine nucleotide-binding proteins (G proteins) and down-stream effectors, such as adenylate cyclase. Promotes the activation of adenylate cyclase, leading to increased intracellular cAMP levels. Inhibits the activity of the calcium channel CACNA1H. Required for normal embryonic development of the adrenal gland and for normal hormonal responses to stress. Plays a role in the response to anxiogenic stimuli. This chain is Corticotropin-releasing factor receptor 1 (CRHR1), found in Macaca mulatta (Rhesus macaque).